A 204-amino-acid chain; its full sequence is uncharacterized protein (204 aa).

This is an uncharacterized protein from Caenorhabditis elegans.